The chain runs to 569 residues: Proline--tRNA ligase (569 aa).

It belongs to the class-II aminoacyl-tRNA synthetase family. ProS type 1 subfamily. As to quaternary structure, homodimer.

The protein localises to the cytoplasm. The enzyme catalyses tRNA(Pro) + L-proline + ATP = L-prolyl-tRNA(Pro) + AMP + diphosphate. Its function is as follows. Catalyzes the attachment of proline to tRNA(Pro) in a two-step reaction: proline is first activated by ATP to form Pro-AMP and then transferred to the acceptor end of tRNA(Pro). As ProRS can inadvertently accommodate and process non-cognate amino acids such as alanine and cysteine, to avoid such errors it has two additional distinct editing activities against alanine. One activity is designated as 'pretransfer' editing and involves the tRNA(Pro)-independent hydrolysis of activated Ala-AMP. The other activity is designated 'posttransfer' editing and involves deacylation of mischarged Ala-tRNA(Pro). The misacylated Cys-tRNA(Pro) is not edited by ProRS. This is Proline--tRNA ligase from Lactiplantibacillus plantarum (strain ATCC BAA-793 / NCIMB 8826 / WCFS1) (Lactobacillus plantarum).